The chain runs to 522 residues: Mediator of RNA polymerase II transcription subunit 1.2 (522 aa).

Positions 13-40 (LLEQRKNQELNIEHIDEEMRLEQVRQAA) form a coiled coil.

The protein belongs to the Mediator complex subunit 1 family. In terms of assembly, component of the Mediator complex.

Its subcellular location is the nucleus. In terms of biological role, component of the Mediator complex, a coactivator involved in the regulated transcription of nearly all RNA polymerase II-dependent genes. Mediator functions as a bridge to convey information from gene-specific regulatory proteins to the basal RNA polymerase II transcription machinery. Mediator is recruited to promoters by direct interactions with regulatory proteins and serves as a scaffold for the assembly of a functional preinitiation complex with RNA polymerase II and the general transcription factors. The polypeptide is Mediator of RNA polymerase II transcription subunit 1.2 (mdt-1.2) (Caenorhabditis elegans).